The chain runs to 1026 residues: Multidrug resistance protein MdtC (1026 aa).

10 helical membrane passes run 12–34, 336–353, 360–382, 431–450, 463–485, 525–547, 853–875, 895–917, 948–970, and 985–1007; these read VATL…LLPV, QSLI…FLFL, AIPA…LCGF, VGFT…LPLL, FAVT…TPML, HARW…YISI, LLLI…ESYV, LEWF…IGIV, LLRF…PLVL, and TIVG…VYLF.

Belongs to the resistance-nodulation-cell division (RND) (TC 2.A.6) family. MdtC subfamily. As to quaternary structure, part of a tripartite efflux system composed of MdtA, MdtB and MdtC. MdtC forms a heteromultimer with MdtB.

The protein resides in the cell inner membrane. The protein is Multidrug resistance protein MdtC of Pectobacterium atrosepticum (strain SCRI 1043 / ATCC BAA-672) (Erwinia carotovora subsp. atroseptica).